Consider the following 239-residue polypeptide: Thymidylate kinase (239 aa).

10-17 is a binding site for ATP; sequence GINGVGKS.

The protein belongs to the thymidylate kinase family.

The catalysed reaction is dTMP + ATP = dTDP + ADP. It functions in the pathway pyrimidine metabolism; dTTP biosynthesis. Its function is as follows. Catalyzes the conversion of dTMP to dTDP. This chain is Thymidylate kinase (TMK), found in African swine fever virus (isolate Warthog/Namibia/Wart80/1980) (ASFV).